The sequence spans 292 residues: Glycine--tRNA ligase alpha subunit (292 aa).

The protein belongs to the class-II aminoacyl-tRNA synthetase family. Tetramer of two alpha and two beta subunits.

The protein localises to the cytoplasm. The catalysed reaction is tRNA(Gly) + glycine + ATP = glycyl-tRNA(Gly) + AMP + diphosphate. The polypeptide is Glycine--tRNA ligase alpha subunit (Geobacter sulfurreducens (strain ATCC 51573 / DSM 12127 / PCA)).